The following is a 101-amino-acid chain: Small ribosomal subunit protein uS14A (101 aa).

Residues 29 to 60 (EIIRSPRSTPEQRTAAQNELAHQPRDASAVRV) are disordered. Residues 34-45 (PRSTPEQRTAAQ) are compositionally biased toward polar residues.

This sequence belongs to the universal ribosomal protein uS14 family. Part of the 30S ribosomal subunit. Contacts proteins S3 and S10.

Binds 16S rRNA, required for the assembly of 30S particles and may also be responsible for determining the conformation of the 16S rRNA at the A site. The polypeptide is Small ribosomal subunit protein uS14A (Mycolicibacterium paratuberculosis (strain ATCC BAA-968 / K-10) (Mycobacterium paratuberculosis)).